Reading from the N-terminus, the 303-residue chain is HTH-type transcriptional regulator CatM (303 aa).

Residues 1-58 (MELRHLRYFVTVVEEQSISKAAEKLCIAQPPLSRQIQKLEEELGIQLFERGFRPAKVT) enclose the HTH lysR-type domain. The segment at residues 18–37 (ISKAAEKLCIAQPPLSRQIQ) is a DNA-binding region (H-T-H motif). The cis,cis-muconate site is built by serine 99 and threonine 128.

Belongs to the LysR transcriptional regulatory family. As to quaternary structure, homotetramer in solution.

Positively regulates the expression of catA, catBCIJFD and benPK in response to cis,cis-muconate. It binds to the catB-catM intercistronic region, to a specific sequence upstream of catA and to the benPK promoter region. Can also repress pca genes. The protein is HTH-type transcriptional regulator CatM (catM) of Acinetobacter baylyi (strain ATCC 33305 / BD413 / ADP1).